Consider the following 213-residue polypeptide: Nicolin-1 (213 aa).

Part of the neuronal tubulin polyglutamylase complex which contains TPGS1, TPGS2, TTLL1, LRRC49 and NICN1. In terms of tissue distribution, high expression level is found in brain, testis, liver and kidney. Weak expression in spleen, leukocytes, small intestine and colon.

The protein localises to the nucleus. This is Nicolin-1 (NICN1) from Homo sapiens (Human).